A 462-amino-acid chain; its full sequence is Argininosuccinate lyase (462 aa).

It belongs to the lyase 1 family. Argininosuccinate lyase subfamily.

The protein localises to the cytoplasm. The catalysed reaction is 2-(N(omega)-L-arginino)succinate = fumarate + L-arginine. Its pathway is amino-acid biosynthesis; L-arginine biosynthesis; L-arginine from L-ornithine and carbamoyl phosphate: step 3/3. In Streptococcus agalactiae serotype Ia (strain ATCC 27591 / A909 / CDC SS700), this protein is Argininosuccinate lyase.